A 328-amino-acid polypeptide reads, in one-letter code: Methionyl-tRNA formyltransferase (328 aa).

110–113 (SLLP) contacts (6S)-5,6,7,8-tetrahydrofolate.

The protein belongs to the Fmt family.

It carries out the reaction L-methionyl-tRNA(fMet) + (6R)-10-formyltetrahydrofolate = N-formyl-L-methionyl-tRNA(fMet) + (6S)-5,6,7,8-tetrahydrofolate + H(+). Its function is as follows. Attaches a formyl group to the free amino group of methionyl-tRNA(fMet). The formyl group appears to play a dual role in the initiator identity of N-formylmethionyl-tRNA by promoting its recognition by IF2 and preventing the misappropriation of this tRNA by the elongation apparatus. This is Methionyl-tRNA formyltransferase from Prochlorococcus marinus (strain MIT 9312).